The following is a 208-amino-acid chain: Probable Brix domain-containing ribosomal biogenesis protein (208 aa).

Positions 1–196 (MMLITTSHRP…IWIMEDGRRW (196 aa)) constitute a Brix domain.

Probably involved in the biogenesis of the ribosome. This is Probable Brix domain-containing ribosomal biogenesis protein from Thermococcus kodakarensis (strain ATCC BAA-918 / JCM 12380 / KOD1) (Pyrococcus kodakaraensis (strain KOD1)).